A 2499-amino-acid polypeptide reads, in one-letter code: Probable polyketide synthase 23 (2499 aa).

Positions 11–430 (DNQVAIVGLG…GSNACVLLSE (420 aa)) constitute a Ketosynthase family 3 (KS3) domain. Active-site for beta-ketoacyl synthase activity residues include Cys177, His316, and His354. The segment at 623–656 (GITPSIIVGHSLGEVASAFCSGMIDLETACFVIY) is acyl/malonyl transferases. Residue Ser633 is the For acyl/malonyl transferase activity of the active site. The interval 924-1044 (INQLGNKNEL…SRILMKSLDV (121 aa)) is N-terminal hotdog fold. One can recognise a PKS/mFAS DH domain in the interval 924–1209 (INQLGNKNEL…IASTLSTNID (286 aa)). His956 serves as the catalytic Proton acceptor; for dehydratase activity. The interval 1059 to 1209 (NWSTLKREQL…IASTLSTNID (151 aa)) is C-terminal hotdog fold. The Proton donor; for dehydratase activity role is filled by Asp1121. The Carrier domain maps to 2414–2491 (EKEFSIRQDI…QIINIVTTKV (78 aa)). Ser2451 bears the O-(pantetheine 4'-phosphoryl)serine mark.

It depends on pantetheine 4'-phosphate as a cofactor.

Probable polyketide synthase. The sequence is that of Probable polyketide synthase 23 (pks23) from Dictyostelium discoideum (Social amoeba).